The primary structure comprises 327 residues: MHTPYLLGALAALAATAVGAPAEHIKKRESRTSAPSGCLTVGSDGTYSTIGDALDALGSSTSSACIYVASGTYEEQLTIDYAGNLTLYGETTDTSTYKDNVVTITHTISSSDAGSLDKSATVNVVSDGFSMYNINVENGYGEGAQAVALVGNADQLGFYGCQFSGYQDTLYVKAGTQYYSNCMIEGAVDYIFGDASVWFGECDIVSNGAGAITASSRETSSDSGWYAIDNCNIKAASGVSLTEEVYLGRPWRVLARVIYQNSVLSDIINPKGWTTMADGATPLYYEYNNSGAGSDTSDREYETSISAAVDKTTVLGETWGDWIDRSY.

The first 19 residues, 1 to 19, serve as a signal peptide directing secretion; it reads MHTPYLLGALAALAATAVG. Residue Asn84 is glycosylated (N-linked (GlcNAc...) asparagine). Gln145 is a binding site for substrate. Residue Asp168 is the Proton donor of the active site. Residue Asp189 is the Nucleophile of the active site. 2 residues coordinate substrate: Arg249 and Trp251. The N-linked (GlcNAc...) asparagine glycan is linked to Asn288.

Belongs to the pectinesterase family.

The protein resides in the secreted. The catalysed reaction is [(1-&gt;4)-alpha-D-galacturonosyl methyl ester](n) + n H2O = [(1-&gt;4)-alpha-D-galacturonosyl](n) + n methanol + n H(+). The protein operates within glycan metabolism; pectin degradation; 2-dehydro-3-deoxy-D-gluconate from pectin: step 1/5. Involved in maceration and soft-rotting of plant tissue. The sequence is that of Probable pectinesterase A (pmeA) from Aspergillus niger (strain ATCC MYA-4892 / CBS 513.88 / FGSC A1513).